The primary structure comprises 81 residues: Exodeoxyribonuclease 7 small subunit (81 aa).

The span at 60 to 70 shows a compositional bias: basic and acidic residues; the sequence is LVDKDGNEKAL. Residues 60-81 are disordered; that stretch reads LVDKDGNEKALDPQNASAPEEE.

It belongs to the XseB family. As to quaternary structure, heterooligomer composed of large and small subunits.

The protein localises to the cytoplasm. It catalyses the reaction Exonucleolytic cleavage in either 5'- to 3'- or 3'- to 5'-direction to yield nucleoside 5'-phosphates.. Functionally, bidirectionally degrades single-stranded DNA into large acid-insoluble oligonucleotides, which are then degraded further into small acid-soluble oligonucleotides. This chain is Exodeoxyribonuclease 7 small subunit, found in Lactobacillus johnsonii (strain CNCM I-12250 / La1 / NCC 533).